Here is a 286-residue protein sequence, read N- to C-terminus: Spermidine/putrescine transport system permease protein PotB (286 aa).

Residues 1–13 lie on the Cytoplasmic side of the membrane; that stretch reads MKIINNKFQKITV. The helical transmembrane segment at 14-33 threads the bilayer; that stretch reads AIIFSWLIFFVLIPNLLVLA. The Periplasmic portion of the chain corresponds to 34–71; it reads VSFLTRDGSNFYAFPITIENYTNLFNPLYAQVVWNSLS. The region spanning 66–274 is the ABC transmembrane type-1 domain; the sequence is VWNSLSMSGI…MALLIFVYYR (209 aa). A helical membrane pass occupies residues 72–91; that stretch reads MSGIATIICLLIGYPFAFMM. Over 92 to 100 the chain is Cytoplasmic; it reads SKIHPKYRP. A helical membrane pass occupies residues 101-120; that stretch reads LLLFLVVLPFWTNSLIRIYG. Topologically, residues 121–151 are periplasmic; the sequence is MKVFLGVKGILNTMLIDMGILSAPIRILNTE. The chain crosses the membrane as a helical span at residues 152-171; that stretch reads IAVIIGLVYLLLPFMILPLY. Over 172–199 the chain is Cytoplasmic; the sequence is SAIEKLDNRLLEAARDLGANTFQRFFRV. A helical transmembrane segment spans residues 200–219; it reads ILPLTMPGIIAGCLLVLLPA. The Periplasmic segment spans residues 220–252; it reads MGMFYVADLLGGAKVLLVGNVIKSEFLISRNWP. A helical transmembrane segment spans residues 253 to 272; that stretch reads FGSAVSIGLTVLMALLIFVY. Residues 273-286 are Cytoplasmic-facing; sequence YRANKLLNRKVELE.

The protein belongs to the binding-protein-dependent transport system permease family. CysTW subfamily.

It localises to the cell inner membrane. Required for the activity of the bacterial periplasmic transport system of putrescine and spermidine. The protein is Spermidine/putrescine transport system permease protein PotB (potB) of Haemophilus influenzae (strain ATCC 51907 / DSM 11121 / KW20 / Rd).